The primary structure comprises 1263 residues: DNA polymerase II large subunit (1263 aa).

Positions 1224 to 1250 are disordered; that stretch reads LENFNSSGNNGKKIEKKEKKAKEKPKK. Over residues 1235-1244 the composition is skewed to basic and acidic residues; sequence KKIEKKEKKA.

Belongs to the archaeal DNA polymerase II family. Heterodimer of a large subunit and a small subunit.

It catalyses the reaction DNA(n) + a 2'-deoxyribonucleoside 5'-triphosphate = DNA(n+1) + diphosphate. The catalysed reaction is Exonucleolytic cleavage in the 3'- to 5'-direction to yield nucleoside 5'-phosphates.. Possesses two activities: a DNA synthesis (polymerase) and an exonucleolytic activity that degrades single-stranded DNA in the 3'- to 5'-direction. Has a template-primer preference which is characteristic of a replicative DNA polymerase. The polypeptide is DNA polymerase II large subunit (polC) (Pyrococcus furiosus (strain ATCC 43587 / DSM 3638 / JCM 8422 / Vc1)).